Consider the following 71-residue polypeptide: Small ribosomal subunit protein bS21 (71 aa).

A disordered region spans residues 40–71 (KPTQVRKRKQAAAVKRHMKRLNREQQRRQRPY). The span at 43 to 59 (QVRKRKQAAAVKRHMKR) shows a compositional bias: basic residues. The span at 60–71 (LNREQQRRQRPY) shows a compositional bias: basic and acidic residues.

Belongs to the bacterial ribosomal protein bS21 family.

The sequence is that of Small ribosomal subunit protein bS21 from Halorhodospira halophila (strain DSM 244 / SL1) (Ectothiorhodospira halophila (strain DSM 244 / SL1)).